Reading from the N-terminus, the 249-residue chain is Methylthioribulose-1-phosphate dehydratase (249 aa).

A disordered region spans residues 1–25; sequence MVDIKPEQTQEGNNNDHLVQSDDPE. Polar residues predominate over residues 9–18; sequence TQEGNNNDHL. A substrate-binding site is contributed by Cys-105. 2 residues coordinate Zn(2+): His-122 and His-124. The Proton donor/acceptor role is filled by Glu-151. Residue His-207 participates in Zn(2+) binding.

The protein belongs to the aldolase class II family. MtnB subfamily. It depends on Zn(2+) as a cofactor.

It is found in the cytoplasm. The enzyme catalyses 5-(methylsulfanyl)-D-ribulose 1-phosphate = 5-methylsulfanyl-2,3-dioxopentyl phosphate + H2O. Its pathway is amino-acid biosynthesis; L-methionine biosynthesis via salvage pathway; L-methionine from S-methyl-5-thio-alpha-D-ribose 1-phosphate: step 2/6. In terms of biological role, catalyzes the dehydration of methylthioribulose-1-phosphate (MTRu-1-P) into 2,3-diketo-5-methylthiopentyl-1-phosphate (DK-MTP-1-P). The polypeptide is Methylthioribulose-1-phosphate dehydratase (Arthroderma otae (strain ATCC MYA-4605 / CBS 113480) (Microsporum canis)).